The chain runs to 846 residues: MTSTANNNTSFYCNNNNSNNNININCCSNTGHNGNNTTETTLTTVNEERCAPTPTPTSTPPHGSALNIQNSNNGCNNIIGSSSNTLSTPSVQATPPTPPPSSSSLLVQPMIVTPSPVVATTSSLITNDDNLNSSTNYLMLPHQAQSSAMTIVQPPPPSTPLSSSSTVVPASTPPPSVMTPITTIQTTATPPSLQPTIHHQTALSFLGYTYNEQYQQNICQLYHQLNANGNGNGNGNGNHNNNNNNYNYNNNSFYQHQQHQHGLYYNQFPIPMNSSVPIIPTQQYIGTKQPQSQSQSQQLQPQPQPQPQLQPQLQSQPQSQQLKRKEASYHNNNNNNNNNNNNNNNNNNNNNNPYNRPTKKIMVSQGLPPISSSPSFQNLNNKYFDFNQPITRNNYNQVNYNNNNNNNNNNNNNYNNISNNNPCNNNNNNKPNNNPNNNNSNSNKTYINKQHRDYGYENNNNNNNKTFQQTSQQQQQQQQQIYKKQNCNNYIDESGDDESGEEYQNYQPYQQYQNFKQNNKDNNNNDDDDDDDDDEEEEEEEEDDNDNCNGNDSYDEENNNNNNNNNNNNQFKNESIIIGDNYYEIINDRIKSIKQKLHFLEKNSKFQWIREKSFNFINEFTGESVVNEELGIRGSKDFSYLKYKTLNPSLDNYITQERIELKNPLIKANIEKLKKDFNFEITKINTTKSESLEIMKSIQQLSTTVRSPLLDRSDLKAQRNHIHGFFTLIIAHQKCLSFDFIYQMRPQSMDHQHGFSNTFTDDFTNGGGCSISDKKNRRTLNDQYKSFISDYFKNHSDHPYPNEDEKIIISALIDLSKYQRNNWFSNKRSREKNQRIVNLKKQIGFH.

Composition is skewed to low complexity over residues Ile-78–Thr-94, Pro-160–Ala-170, Gly-237–Asn-249, Gln-289–Pro-301, Leu-309–Gln-321, Asn-331–Asn-352, Asn-394–Asn-443, and Asn-458–Tyr-482. Disordered stretches follow at residues Ile-78–Ser-103, Ile-151–Val-177, Asn-230–Asn-249, Gly-286–Pro-374, Asn-394–Tyr-482, and Phe-515–Phe-571. A compositionally biased stretch (acidic residues) spans Asn-524–Asp-546. A coiled-coil region spans residues Ser-553–Ser-604. The segment covering Asn-559–Asn-569 has biased composition (low complexity). The segment at residues Asp-773–Arg-835 is a DNA-binding region (homeobox).

The protein resides in the nucleus. Its function is as follows. Putative transcription factor. This chain is Homeobox protein 12 (hbx12), found in Dictyostelium discoideum (Social amoeba).